Here is a 607-residue protein sequence, read N- to C-terminus: MNNSGFAFDPDVFLSHVSTLSGVYQMRDQNGTVLYVGKAKNLRQRLSHYFQKTGLSVKTRALMRAVYDIQTTSTPTEAEALLLENNLIKQYQPKFNILLRDDKSYPYICLSQHDFPRLFLYRGARKNGDFFGPYPNVQSAHHALAILQKVFRLRPCLDSFFKNRSRPCLQYQIKRCYAPCVGKISAEMYAQTVQHARDFLTGNSEHLLQTLTEHMLQASAAQQYERAAIVRDQISELRTIQQKQSMVVYAANVDVLAVATAYGKACVQVLFFRDGHSVTSQAFFPKLPELLPAGAILQAFIGQFYHQRPVPSQIVLSEALPDMDAVSEFLSQMSAHTVTLTTQPRAIRKKWLRMTQENARLNLRLHLAQKLSMHERFKALAQAFDWQKMPQRLECVDISHMQGEYTVASCVVFDRRGAVKSDYRRYKINGITGGDDYAAMKQVIKRRFARLKKGEGVMPDVFFVDGGRGQLQQAIAVFEEMQIEGVQLIGVAKGEGRKAGLEQFWFPHENRPRTLPADSQAMQLIIHIRDEAHRFAISAHRRGRDKKVRVSLLEEIPNIGRKRRQALLQHFGNLAGLMQASPEDITRVPGISVKLAAQIYAALHQGE.

The region spanning 19-97 (TLSGVYQMRD…IKQYQPKFNI (79 aa)) is the GIY-YIG domain. Positions 205–240 (EHLLQTLTEHMLQASAAQQYERAAIVRDQISELRTI) constitute a UVR domain.

Belongs to the UvrC family. In terms of assembly, interacts with UvrB in an incision complex.

The protein resides in the cytoplasm. In terms of biological role, the UvrABC repair system catalyzes the recognition and processing of DNA lesions. UvrC both incises the 5' and 3' sides of the lesion. The N-terminal half is responsible for the 3' incision and the C-terminal half is responsible for the 5' incision. In Dichelobacter nodosus (strain VCS1703A), this protein is UvrABC system protein C.